The sequence spans 391 residues: Calcium-binding and spermatid-specific protein 1 (391 aa).

Disordered regions lie at residues 1–23 (MAEDGSPKIYSRPPRDNSKTPTE), 90–110 (PEKEITTPTETPNSKPKGSIT), and 152–221 (KEVV…KEVT). Positions 90–101 (PEKEITTPTETP) are enriched in low complexity. Residues Ser253 and Ser269 each carry the phosphoserine modification. The tract at residues 271–299 (EKAKDNVEDPLNDEESTDGANDWMEKETA) is disordered. A compositionally biased stretch (acidic residues) spans 278-287 (EDPLNDEEST). 5 positions are modified to phosphoserine: Ser314, Ser347, Ser357, Ser372, and Ser376. The segment at 330 to 351 (EESHVNTTDLPENETTESVTNV) is disordered.

Detected only in testis. Expressed from stages X to VIII of the seminiferous epithelial cycle. Expressed from step 13 to step 16 of spermatid development (at protein level).

It is found in the cytoplasm. The protein localises to the mitochondrion inner membrane. The protein resides in the cell projection. Its subcellular location is the cilium. It localises to the flagellum. It is found in the cytoplasmic vesicle. The protein localises to the secretory vesicle. The protein resides in the acrosome. Functionally, calcium-binding protein. Essential for maintaining the structural integrity of the sperm flagella. The sequence is that of Calcium-binding and spermatid-specific protein 1 (Cabs1) from Mus musculus (Mouse).